The chain runs to 122 residues: Ribonuclease pancreatic (122 aa).

Residues lysine 6 and arginine 9 each coordinate substrate. The Proton acceptor role is filled by histidine 11. Intrachain disulfides connect cysteine 25-cysteine 83, cysteine 39-cysteine 94, cysteine 57-cysteine 109, and cysteine 64-cysteine 71. Substrate contacts are provided by residues 40 to 44 (KPVNT), lysine 65, and arginine 84. The active-site Proton donor is the histidine 117.

The protein belongs to the pancreatic ribonuclease family. As to quaternary structure, monomer. Interacts with and forms tight 1:1 complexes with RNH1. Dimerization of two such complexes may occur. Interaction with RNH1 inhibits this protein. Pancreas.

It localises to the secreted. It carries out the reaction an [RNA] containing cytidine + H2O = an [RNA]-3'-cytidine-3'-phosphate + a 5'-hydroxy-ribonucleotide-3'-[RNA].. The catalysed reaction is an [RNA] containing uridine + H2O = an [RNA]-3'-uridine-3'-phosphate + a 5'-hydroxy-ribonucleotide-3'-[RNA].. Endonuclease that catalyzes the cleavage of RNA on the 3' side of pyrimidine nucleotides. Acts on single-stranded and double-stranded RNA. The protein is Ribonuclease pancreatic of Notamacropus rufogriseus (Red-necked wallaby).